The primary structure comprises 375 residues: Beta-1,3-N-acetylglucosaminyltransferase lunatic fringe (375 aa).

The Cytoplasmic portion of the chain corresponds to 1 to 8 (MLKNWGKK). The helical; Signal-anchor for type II membrane protein transmembrane segment at 9-29 (LLLSIVGATLTCLLVLVVDQQ) threads the bilayer. The Lumenal portion of the chain corresponds to 30-375 (SRHMLETQSD…TPWCPWKAAY (346 aa)). The segment at 53-73 (DLDPANPGDGGDPANSAQDSG) is disordered. Residue arginine 125 coordinates substrate. Asparagine 163 carries N-linked (GlcNAc...) asparagine glycosylation. 2 disulfides stabilise this stretch: cysteine 164–cysteine 175 and cysteine 193–cysteine 256. Aspartate 197 is a substrate binding site. Aspartate 198 lines the Mn(2+) pocket. Residue aspartate 286 is part of the active site. Position 310 (histidine 310) interacts with Mn(2+). A disulfide bridge connects residues cysteine 360 and cysteine 369.

Belongs to the glycosyltransferase 31 family. Mn(2+) serves as cofactor. It depends on Co(2+) as a cofactor. Post-translationally, a soluble form may be derived from the membrane form by proteolytic processing. As to expression, detected in the neural tube, the eye and the otic vesicle, expression coincides with the region that produces the medial, intermediate and lateral neurons.

Its subcellular location is the golgi apparatus membrane. It catalyses the reaction 3-O-(alpha-L-fucosyl)-L-threonyl-[EGF-like domain protein] + UDP-N-acetyl-alpha-D-glucosamine = 3-O-(N-acetyl-beta-D-glucosaminyl-(1-&gt;3)-alpha-L-fucosyl)-L-threonyl-[EGF-like domain protein] + UDP + H(+). The enzyme catalyses 3-O-(alpha-L-fucosyl)-L-seryl-[EGF-like domain protein] + UDP-N-acetyl-alpha-D-glucosamine = 3-O-(N-acetyl-beta-D-glucosaminyl-(1-&gt;3)-alpha-L-fucosyl)-L-seryl-[EGF-like domain protein] + UDP + H(+). Its function is as follows. Glycosyltransferase that initiates the elongation of O-linked fucose residues attached to EGF-like repeats in the extracellular domain of Notch molecules. Essential mediator of somite segmentation and patterning. May be involved in mesoderm development. The chain is Beta-1,3-N-acetylglucosaminyltransferase lunatic fringe (lfng) from Xenopus laevis (African clawed frog).